The chain runs to 165 residues: Chorismate pyruvate-lyase (165 aa).

3 residues coordinate substrate: R77, L115, and E156.

The protein belongs to the UbiC family. Monomer.

It localises to the cytoplasm. The enzyme catalyses chorismate = 4-hydroxybenzoate + pyruvate. It functions in the pathway cofactor biosynthesis; ubiquinone biosynthesis. Removes the pyruvyl group from chorismate, with concomitant aromatization of the ring, to provide 4-hydroxybenzoate (4HB) for the ubiquinone pathway. The protein is Chorismate pyruvate-lyase of Salmonella typhi.